Here is a 794-residue protein sequence, read N- to C-terminus: Protocadherin beta-6 (794 aa).

The signal sequence occupies residues 1 to 27 (MMQTKVQNKKRQVAFFILLMLWGEVGS). Residues 28-688 (ESIQYSVLEE…AQADLLTVYL (661 aa)) lie on the Extracellular side of the membrane. Cadherin domains lie at 34 to 132 (VLEE…APEF), 137 to 241 (MLLK…VPEF), 246 to 345 (YEAQ…APEL), 350 to 449 (FISP…APAF), and 454 to 559 (YTLF…SPFV). Asn46 carries N-linked (GlcNAc...) asparagine glycosylation. Residues Cys95 and Cys101 are joined by a disulfide bond. Asn183 is a glycosylation site (N-linked (GlcNAc...) asparagine). N-linked (GlcNAc...) asparagine glycosylation is present at Asn416. Asn565 is a glycosylation site (N-linked (GlcNAc...) asparagine). Residues 566 to 669 (GSAPCTELVP…LVDGFSQPYL (104 aa)) form the Cadherin 6 domain. The chain crosses the membrane as a helical span at residues 689–709 (VVALASVSSLFLFSVLLFVAV). Residues 710–794 (RLCRRSRAAS…PTSRNSFPFS (85 aa)) are Cytoplasmic-facing. Residues 773 to 794 (PPQGTEREMEETPTSRNSFPFS) are disordered. The span at 784-794 (TPTSRNSFPFS) shows a compositional bias: polar residues.

As to quaternary structure, forms homodimers in trans (molecules expressed by two different cells). Forms promiscuous heterodimers in cis (at the plasma membrane of the same cell) with other protocadherins.

It is found in the cell membrane. Functionally, calcium-dependent cell-adhesion protein involved in cells self-recognition and non-self discrimination. Thereby, it is involved in the establishment and maintenance of specific neuronal connections in the brain. This is Protocadherin beta-6 from Pan troglodytes (Chimpanzee).